The sequence spans 146 residues: Leghemoglobin Lb120-29 (146 aa).

Residues 2–146 enclose the Globin domain; sequence GFTDKQEALV…LASAIKKAMS (145 aa). A nitrated tyrosine mark is found at Y24 and Y29. S44 contacts heme b. Residue S44 is modified to Phosphoserine. H61 is an O2 binding site. Heme b contacts are provided by K64, H93, and K96. The residue at position 134 (Y134) is a Nitrated tyrosine.

The protein belongs to the plant globin family. Monomer. Nitrated in effective nodules and particularly in hypoxic conditions; this mechanism may play a protective role in the symbiosis by buffering toxic peroxynitrite NO(2)(-). Nitration level decrease during nodule senescence. In terms of processing, phosphorylation at Ser-44 disrupts the molecular environment of its porphyrin ring oxygen binding pocket, thus leading to a reduced oxygen consumption and to the delivery of oxygen O(2) to symbiosomes. As to expression, root nodules.

Its subcellular location is the cytoplasm. It is found in the cytosol. The protein localises to the nucleus. Its function is as follows. Leghemoglobin that reversibly binds oxygen O(2) through a pentacoordinated heme iron. In root nodules, facilitates the diffusion of oxygen to the bacteroids while preventing the bacterial nitrogenase from being inactivated by buffering dioxygen, nitric oxide and carbon monoxide, and promoting the formation of reactive oxygen species (ROS, e.g. H(2)O(2)). This role is essential for symbiotic nitrogen fixation (SNF). This Pisum sativum (Garden pea) protein is Leghemoglobin Lb120-29.